The chain runs to 393 residues: NAD(P)H-quinone oxidoreductase subunit H 1 (393 aa).

Belongs to the complex I 49 kDa subunit family. As to quaternary structure, NDH-1 can be composed of about 15 different subunits; different subcomplexes with different compositions have been identified which probably have different functions.

Its subcellular location is the cell inner membrane. The enzyme catalyses a plastoquinone + NADH + (n+1) H(+)(in) = a plastoquinol + NAD(+) + n H(+)(out). It carries out the reaction a plastoquinone + NADPH + (n+1) H(+)(in) = a plastoquinol + NADP(+) + n H(+)(out). Its function is as follows. NDH-1 shuttles electrons from an unknown electron donor, via FMN and iron-sulfur (Fe-S) centers, to quinones in the respiratory and/or the photosynthetic chain. The immediate electron acceptor for the enzyme in this species is believed to be plastoquinone. Couples the redox reaction to proton translocation, and thus conserves the redox energy in a proton gradient. Cyanobacterial NDH-1 also plays a role in inorganic carbon-concentration. The polypeptide is NAD(P)H-quinone oxidoreductase subunit H 1 (Gloeobacter violaceus (strain ATCC 29082 / PCC 7421)).